The sequence spans 465 residues: UDP-N-acetylmuramate--L-alanine ligase (465 aa).

ATP is bound at residue Gly112–Thr118.

It belongs to the MurCDEF family.

The protein localises to the cytoplasm. The catalysed reaction is UDP-N-acetyl-alpha-D-muramate + L-alanine + ATP = UDP-N-acetyl-alpha-D-muramoyl-L-alanine + ADP + phosphate + H(+). The protein operates within cell wall biogenesis; peptidoglycan biosynthesis. Cell wall formation. This Burkholderia cenocepacia (strain HI2424) protein is UDP-N-acetylmuramate--L-alanine ligase.